Here is a 405-residue protein sequence, read N- to C-terminus: Argininosuccinate synthase (405 aa).

8-16 (AYSGGLDTS) is an ATP binding site. Residues Tyr-86 and Ser-91 each contribute to the L-citrulline site. Gly-116 contacts ATP. The L-aspartate site is built by Thr-118, Asn-122, and Asp-123. Asn-122 is a binding site for L-citrulline. Residues Arg-126, Ser-175, Ser-184, Glu-260, and Tyr-272 each contribute to the L-citrulline site.

Belongs to the argininosuccinate synthase family. Type 1 subfamily. In terms of assembly, homotetramer.

The protein resides in the cytoplasm. It carries out the reaction L-citrulline + L-aspartate + ATP = 2-(N(omega)-L-arginino)succinate + AMP + diphosphate + H(+). Its pathway is amino-acid biosynthesis; L-arginine biosynthesis; L-arginine from L-ornithine and carbamoyl phosphate: step 2/3. This chain is Argininosuccinate synthase, found in Koribacter versatilis (strain Ellin345).